Here is a 953-residue protein sequence, read N- to C-terminus: Nonsense-mediated mRNA decay factor SMG8 (953 aa).

Disordered stretches follow at residues 571-604 (AEDAELDPDEEDEELPTGEREEQHITQSNGCSQP) and 629-653 (PCFDQSSSSEAESTCSGTSSEESNT). Residues 573-586 (DAELDPDEEDEELP) show a composition bias toward acidic residues. Positions 595–604 (ITQSNGCSQP) are enriched in polar residues. Low complexity predominate over residues 634-653 (SSSSEAESTCSGTSSEESNT).

Belongs to the SMG8 family.

Involved in nonsense-mediated decay (NMD) of mRNAs containing premature stop codons. Probable component of kinase complex containing nonC and recruited to stalled ribosomes. The protein is Nonsense-mediated mRNA decay factor SMG8 of Drosophila pseudoobscura pseudoobscura (Fruit fly).